A 223-amino-acid chain; its full sequence is uncharacterized protein (223 aa).

Residues 33–67 (CPICGGKGTLKAIQFIHRIPYFGEVMESTVVCERC) form a C4-type zinc finger.

Belongs to the ZPR1 family.

This is an uncharacterized protein from Pyrococcus horikoshii (strain ATCC 700860 / DSM 12428 / JCM 9974 / NBRC 100139 / OT-3).